The primary structure comprises 417 residues: Gamma-glutamyl phosphate reductase (417 aa).

Belongs to the gamma-glutamyl phosphate reductase family.

It is found in the cytoplasm. It carries out the reaction L-glutamate 5-semialdehyde + phosphate + NADP(+) = L-glutamyl 5-phosphate + NADPH + H(+). Its pathway is amino-acid biosynthesis; L-proline biosynthesis; L-glutamate 5-semialdehyde from L-glutamate: step 2/2. In terms of biological role, catalyzes the NADPH-dependent reduction of L-glutamate 5-phosphate into L-glutamate 5-semialdehyde and phosphate. The product spontaneously undergoes cyclization to form 1-pyrroline-5-carboxylate. This is Gamma-glutamyl phosphate reductase from Escherichia coli O127:H6 (strain E2348/69 / EPEC).